The primary structure comprises 180 residues: ATP-dependent protease subunit HslV (180 aa).

Residue threonine 7 is part of the active site. Residues glycine 163, cysteine 166, and threonine 169 each contribute to the Na(+) site.

It belongs to the peptidase T1B family. HslV subfamily. A double ring-shaped homohexamer of HslV is capped on each side by a ring-shaped HslU homohexamer. The assembly of the HslU/HslV complex is dependent on binding of ATP.

Its subcellular location is the cytoplasm. It carries out the reaction ATP-dependent cleavage of peptide bonds with broad specificity.. Its activity is regulated as follows. Allosterically activated by HslU binding. In terms of biological role, protease subunit of a proteasome-like degradation complex believed to be a general protein degrading machinery. This is ATP-dependent protease subunit HslV from Alcanivorax borkumensis (strain ATCC 700651 / DSM 11573 / NCIMB 13689 / SK2).